A 696-amino-acid chain; its full sequence is D-(-)-3-hydroxybutyrate oligomer hydrolase (696 aa).

The N-terminal stretch at 1–26 (MDTHGWGSRILVGAALAALTMLGACN) is a signal peptide. The active-site Charge relay system is serine 309.

The protein belongs to the D-(-)-3-hydroxybutyrate oligomer hydrolase family.

Its subcellular location is the secreted. The catalysed reaction is (3R)-hydroxybutanoate dimer + H2O = 2 (R)-3-hydroxybutanoate + H(+). It participates in lipid metabolism; butanoate metabolism. Its function is as follows. Participates in the degradation of poly-3-hydroxybutyrate (PHB). It works downstream of poly(3-hydroxybutyrate) depolymerase, hydrolyzing D(-)-3-hydroxybutyrate oligomers of various length (3HB-oligomers) into 3HB-monomers. This Burkholderia vietnamiensis (strain G4 / LMG 22486) (Burkholderia cepacia (strain R1808)) protein is D-(-)-3-hydroxybutyrate oligomer hydrolase.